A 57-amino-acid polypeptide reads, in one-letter code: UPF0391 membrane protein RPC_3278 (57 aa).

The next 2 membrane-spanning stretches (helical) occupy residues 4–24 and 30–50; these read WVIT…GGIA and IAKI…VVGL.

This sequence belongs to the UPF0391 family.

It localises to the cell membrane. This chain is UPF0391 membrane protein RPC_3278, found in Rhodopseudomonas palustris (strain BisB18).